Consider the following 173-residue polypeptide: Crossover junction endodeoxyribonuclease RuvC (173 aa).

Active-site residues include aspartate 8, glutamate 67, and aspartate 139. Aspartate 8, glutamate 67, and aspartate 139 together coordinate Mg(2+).

It belongs to the RuvC family. As to quaternary structure, homodimer which binds Holliday junction (HJ) DNA. The HJ becomes 2-fold symmetrical on binding to RuvC with unstacked arms; it has a different conformation from HJ DNA in complex with RuvA. In the full resolvosome a probable DNA-RuvA(4)-RuvB(12)-RuvC(2) complex forms which resolves the HJ. Mg(2+) serves as cofactor.

It localises to the cytoplasm. It carries out the reaction Endonucleolytic cleavage at a junction such as a reciprocal single-stranded crossover between two homologous DNA duplexes (Holliday junction).. The RuvA-RuvB-RuvC complex processes Holliday junction (HJ) DNA during genetic recombination and DNA repair. Endonuclease that resolves HJ intermediates. Cleaves cruciform DNA by making single-stranded nicks across the HJ at symmetrical positions within the homologous arms, yielding a 5'-phosphate and a 3'-hydroxyl group; requires a central core of homology in the junction. The consensus cleavage sequence is 5'-(A/T)TT(C/G)-3'. Cleavage occurs on the 3'-side of the TT dinucleotide at the point of strand exchange. HJ branch migration catalyzed by RuvA-RuvB allows RuvC to scan DNA until it finds its consensus sequence, where it cleaves and resolves the cruciform DNA. In Shewanella sp. (strain ANA-3), this protein is Crossover junction endodeoxyribonuclease RuvC.